The chain runs to 658 residues: Carnitine O-palmitoyltransferase 2, mitochondrial (658 aa).

Residues 1 to 25 constitute a mitochondrion transit peptide; the sequence is MMPRLLLRDWPRCPSLVLGAPSRPL. Residues 26 to 178 are Mitochondrial matrix-facing; sequence SAVSGPAEYL…GLLEPEVFHL (153 aa). Lys-69 is subject to N6-succinyllysine. Lys-79 is modified (N6-acetyllysine). The residue at position 85 (Lys-85) is an N6-succinyllysine. The segment at residues 179–208 is an intramembrane region (note=Mitochondrial inner membrane); sequence NPARSDTDAFKRLIRFVPSSLSWYGAYLVN. Residues 209 to 658 are Mitochondrial matrix-facing; the sequence is AYPLDMSQYF…DALEGKAIKT (450 aa). At Lys-239 the chain carries N6-acetyllysine; alternate. Lys-239 carries the N6-succinyllysine; alternate modification. Position 305 is an N6-acetyllysine (Lys-305). The Proton acceptor role is filled by His-372. Lys-418 carries the N6-acetyllysine; alternate modification. Lys-418 carries the N6-succinyllysine; alternate modification. Residues Lys-424 and Lys-439 each carry the N6-succinyllysine modification. 452 to 464 lines the CoA pocket; the sequence is GKEFLKKKKLSPD. Residues Tyr-486, Ser-488, and Thr-499 each coordinate (R)-carnitine. Residues Lys-510 and Lys-544 each carry the N6-acetyllysine; alternate modification. An N6-succinyllysine; alternate mark is found at Lys-510 and Lys-544.

The protein belongs to the carnitine/choline acetyltransferase family.

Its subcellular location is the mitochondrion inner membrane. It catalyses the reaction (R)-carnitine + hexadecanoyl-CoA = O-hexadecanoyl-(R)-carnitine + CoA. It carries out the reaction octanoyl-CoA + (R)-carnitine = O-octanoyl-(R)-carnitine + CoA. The catalysed reaction is decanoyl-CoA + (R)-carnitine = O-decanoyl-(R)-carnitine + CoA. The enzyme catalyses dodecanoyl-CoA + (R)-carnitine = O-dodecanoyl-R-carnitine + CoA. It catalyses the reaction tetradecanoyl-CoA + (R)-carnitine = O-tetradecanoyl-(R)-carnitine + CoA. It carries out the reaction (R)-carnitine + octadecanoyl-CoA = O-octadecanoyl-(R)-carnitine + CoA. The catalysed reaction is eicosanoyl-CoA + (R)-carnitine = O-eicosanoyl-(R)-carnitine + CoA. The enzyme catalyses (9Z)-tetradecenoyl-CoA + (R)-carnitine = O-(9Z)-tetradecenoyl-(R)-carnitine + CoA. It catalyses the reaction (5Z)-tetradecenoyl-CoA + (R)-carnitine = O-(5Z)-tetradecenoyl-(R)-carnitine + CoA. It carries out the reaction (R)-carnitine + (9Z)-octadecenoyl-CoA = O-(9Z)-octadecenoyl-(R)-carnitine + CoA. The catalysed reaction is 4,8-dimethylnonanoyl-CoA + (R)-carnitine = O-4,8-dimethylnonanoyl-(R)-carnitine + CoA. It participates in lipid metabolism; fatty acid beta-oxidation. Involved in the intramitochondrial synthesis of acylcarnitines from accumulated acyl-CoA metabolites. Reconverts acylcarnitines back into the respective acyl-CoA esters that can then undergo beta-oxidation, an essential step for the mitochondrial uptake of long-chain fatty acids and their subsequent beta-oxidation in the mitochondrion. Active with medium (C8-C12) and long-chain (C14-C18) acyl-CoA esters. This Mus musculus (Mouse) protein is Carnitine O-palmitoyltransferase 2, mitochondrial.